Here is a 647-residue protein sequence, read N- to C-terminus: Auxin efflux carrier component 2 (647 aa).

The Extracellular portion of the chain corresponds to 1-7; that stretch reads MITGKDM. The chain crosses the membrane as a helical span at residues 8-28; the sequence is YDVLAAMVPLYVAMILAYGSV. Over 29–38 the chain is Cytoplasmic; sequence RWWGIFTPDQ. A helical membrane pass occupies residues 39-59; it reads CSGINRFVAVFAVPLLSFHFI. Residue V51 coordinates (indol-3-yl)acetate. The Extracellular segment spans residues 60-68; it reads SSNDPYAMN. Residues 69–89 traverse the membrane as a helical segment; it reads YHFLAADSLQKVVILAALFLW. The Cytoplasmic portion of the chain corresponds to 90 to 100; it reads QAFSRRGSLEW. A helical membrane pass occupies residues 101–121; it reads MITLFSLSTLPNTLVMGIPLL. Residues N112 and L114 each coordinate (indol-3-yl)acetate. Residues 122–131 lie on the Extracellular side of the membrane; sequence RAMYGDFSGN. Residues 132–152 traverse the membrane as a helical segment; the sequence is LMVQIVVLQSIIWYTLMLFLF. Y145 contacts (indol-3-yl)acetate. At 153–507 the chain is on the cytoplasmic side; sequence EFRGAKLLIS…LIRNPNTYSS (355 aa). A phosphoserine mark is found at S237, S258, and S310. Residues 339-380 are disordered; sequence SVPSYPPPNPMFTGSTSGASGVKKKESGGGGSGGGVGVGGQN. T354 carries the phosphothreonine modification. Residues 366–378 are compositionally biased toward gly residues; the sequence is GGGGSGGGVGVGG. S393 carries the phosphoserine modification. 2 disordered regions span residues 397 to 420 and 440 to 481; these read EANA…KVSI and PGRK…QQMP. Residues 508–528 traverse the membrane as a helical segment; sequence LFGLAWSLVSFKWNIKMPTIM. Over 529–531 the chain is Extracellular; it reads SGS. The chain crosses the membrane as a helical span at residues 532-552; the sequence is ISILSDAGLGMAMFSLGLFMA. Residues 553–568 lie on the Cytoplasmic side of the membrane; the sequence is LQPKIIACGKSVAGFA. The chain crosses the membrane as a helical span at residues 569 to 589; it reads MAVRFLTGPAVIAATSIAIGI. Over 590–592 the chain is Extracellular; that stretch reads RGD. Residues 593–613 traverse the membrane as a helical segment; sequence LLHIAIVQAALPQGIVPFVFA. Residues I607 and V608 each contribute to the (indol-3-yl)acetate site. Over 614–626 the chain is Cytoplasmic; sequence KEYNVHPDILSTA. Residues 627 to 647 traverse the membrane as a helical segment; it reads VIFGMLVALPVTVLYYVLLGL.

This sequence belongs to the auxin efflux carrier (TC 2.A.69.1) family. As to quaternary structure, homodimer. Interacts with FYPP1 and FYPP3. Component of a complex made of PINs (e.g. PIN1 and PIN2), MAB4/MELs (e.g. NPY1/MAB4 and NPY5/MEL1) and AGC kinases (e.g. D6PK and PID) at the plasma membrane. Binds directly to NPY1/MAB4, NPY5/MEL1 and PID. As to expression, root-specific. Localized to the cortex, epidermis and lateral root cap, predominantly at the upper side of cells.

It localises to the cell membrane. Its function is as follows. Acts as a component of the auxin efflux carrier. Seems to be involved in the root-specific auxin transport, and mediates the root gravitropism. Its particular localization suggests a role in the translocation of auxin towards the elongation zone. Recrutes NPY proteins (e.g. NPY1/MAB4 and NPY5/MEL1) to the plasma membrane in a polar basal localization in root epidermis; this activity is optimized by AGC kinases-mediated (e.g. D6PK and PID) phosphorylation that limits their lateral diffusion-based escape. The chain is Auxin efflux carrier component 2 from Arabidopsis thaliana (Mouse-ear cress).